The chain runs to 455 residues: MFS-type transporter SLC18B1 (455 aa).

N-acetylmethionine is present on Met-1. The tract at residues 1-26 (MDTAGPPAPAGTEGDGPGGSTGETSR) is disordered. Over 1 to 32 (MDTAGPPAPAGTEGDGPGGSTGETSRRLSKEQ) the chain is Cytoplasmic. The residue at position 20 (Ser-20) is a Phosphoserine. Residues 33-53 (IFVLVSAASMNLGCMMTYSIL) traverse the membrane as a helical segment. Residues 54 to 69 (GPFFPKEAEKKGASNT) are Extracellular-facing. The helical transmembrane segment at 70 to 90 (TIGMIFGCYALFELLASLVFG) threads the bilayer. Residues 91–99 (KYLVHIGAK) are Cytoplasmic-facing. A helical transmembrane segment spans residues 100-120 (FMFIAGMFVSGGVTILFGVLD). Over 121–126 (QLPEGP) the chain is Extracellular. A helical membrane pass occupies residues 127–147 (IFIAMCFLVRIVDAIGFGAAI). The Cytoplasmic portion of the chain corresponds to 148–166 (TASSSILAKAFPNNVATVM). A helical transmembrane segment spans residues 167 to 187 (GSLEVFSGLGLVAGPPLGGLL). At 188–194 (YQSFGYE) the chain is on the extracellular side. The chain crosses the membrane as a helical span at residues 195 to 215 (VPFIFLGCIVLLMIPLNLCIL). The Cytoplasmic portion of the chain corresponds to 216 to 232 (PSYESDAGKQSFWKLVT). The chain crosses the membrane as a helical span at residues 233-253 (LPKIGLIAFVIISLSSCFGFL). At 254 to 271 (DPTLSLFVMKKFSLSTGY) the chain is on the extracellular side. A helical transmembrane segment spans residues 272–292 (VGLVFLGLSLSYAISSPLFGL). Residues 293–303 (LSDKMPNLRKW) lie on the Cytoplasmic side of the membrane. A helical transmembrane segment spans residues 304 to 324 (FLVFGNLITAGCYMLLGPIPL). At 325–330 (LHIKSQ) the chain is on the extracellular side. A helical membrane pass occupies residues 331-351 (LWLLVLVLVINGVSAGMSIIP). Residues 352–376 (TFPEMLSCAYANGFEDGISTLGLVS) are Cytoplasmic-facing. A helical transmembrane segment spans residues 377–397 (GLFGAMWSVGAFMGPILGGFL). At 398–406 (CEKIGFEWA) the chain is on the extracellular side. Residues 407–427 (AAIQGLWTLLSGVAMALFYLW) form a helical membrane-spanning segment. Residues 428–455 (EDSTMRRSKAQNILGTEEEQAALLPNDT) are Cytoplasmic-facing.

As to expression, expressed in brain structures, particularly in hippocampus, cortex, and cerebellum (at protein level). Expressed in astrocytes and hippocampal neurons (at protein level). Expressed in peritoneal mast cells.

It localises to the cytoplasmic vesicle. The protein localises to the secretory vesicle membrane. The protein resides in the secretory vesicle. It is found in the synaptic vesicle membrane. The enzyme catalyses spermine(in) + n H(+)(out) = spermine(out) + n H(+)(in). It catalyses the reaction spermidine(in) + n H(+)(out) = spermidine(out) + n H(+)(in). It carries out the reaction serotonin(in) + n H(+)(out) = serotonin(out) + n H(+)(in). Proton-coupled polyamine antiporter involved in the translocation of polyamines from cytosol into secretory vesicles prior to their release via exocytosis. Uses the electrochemical proton gradient generated by a V-type proton-pumping ATPase to couple the efflux of protons with the uptake of a polyamine molecule. Facilitates vesicular storage of spermine and spermidine in astrocytes with an impact on glutamatergic neuronal transmission and memory formation. Upon antigen stimulation, regulates polyamine accumulation and release in mast cell secretory granules, which in turn potentiates mast cell degranulation and histamine secretion. The sequence is that of MFS-type transporter SLC18B1 from Rattus norvegicus (Rat).